Consider the following 409-residue polypeptide: Elongation factor Tu, chloroplastic (409 aa).

Positions 10-214 constitute a tr-type G domain; the sequence is KPHVNIGTIG…AVDTYIPTPE (205 aa). Residues 19–26 are G1; sequence GHVDHGKT. A GTP-binding site is contributed by 19 to 26; it reads GHVDHGKT. Residue threonine 26 participates in Mg(2+) binding. Residues 60–64 are G2; that stretch reads GITIN. Positions 81–84 are G3; it reads DCPG. GTP contacts are provided by residues 81–85 and 136–139; these read DCPGH and NKED. Residues 136 to 139 form a G4 region; that stretch reads NKED. The tract at residues 174–176 is G5; sequence SAL.

Belongs to the TRAFAC class translation factor GTPase superfamily. Classic translation factor GTPase family. EF-Tu/EF-1A subfamily.

It localises to the plastid. The protein localises to the chloroplast. The catalysed reaction is GTP + H2O = GDP + phosphate + H(+). GTP hydrolase that promotes the GTP-dependent binding of aminoacyl-tRNA to the A-site of ribosomes during protein biosynthesis. The chain is Elongation factor Tu, chloroplastic (tufA) from Porphyra purpurea (Red seaweed).